A 179-amino-acid chain; its full sequence is Putative ankyrin repeat protein RF_0922 (179 aa).

ANK repeat units follow at residues 5 to 34 (KGCTALTWAVDKGLEKVCEILIPNMSEQAI), 40 to 72 (NGSTALTLAAWKGLEKICRLLIPKMSPQAINHV), 75 to 104 (NGNTALTLAAWKGLEKICELLIPKMSSQAI), 110 to 139 (NGDTALTLAAWKGLEKICEMLIPKMSEQAI), and 145 to 174 (NGNTALTLAADKSLEKICEMLIPKMSKQAI).

This Rickettsia felis (strain ATCC VR-1525 / URRWXCal2) (Rickettsia azadi) protein is Putative ankyrin repeat protein RF_0922.